The sequence spans 623 residues: UvrABC system protein C (623 aa).

The GIY-YIG domain maps to 27–105; the sequence is GSPGVYRMLD…IKQLKPRYNV (79 aa). The UVR domain maps to 215 to 250; the sequence is TKVQANLAEQMQAASEAMEFERAAALRDRIKALTQV.

Belongs to the UvrC family. Interacts with UvrB in an incision complex.

Its subcellular location is the cytoplasm. The UvrABC repair system catalyzes the recognition and processing of DNA lesions. UvrC both incises the 5' and 3' sides of the lesion. The N-terminal half is responsible for the 3' incision and the C-terminal half is responsible for the 5' incision. The sequence is that of UvrABC system protein C from Cereibacter sphaeroides (strain ATCC 17023 / DSM 158 / JCM 6121 / CCUG 31486 / LMG 2827 / NBRC 12203 / NCIMB 8253 / ATH 2.4.1.) (Rhodobacter sphaeroides).